A 2412-amino-acid chain; its full sequence is Centrosomal protein of 295 kDa (2412 aa).

Positions 1–540 (MKRKGMNTKL…KQADQPEVCC (540 aa)) are necessary for centriole targeting and microtubule association. Phosphoserine is present on S13. 5 coiled-coil regions span residues 63 to 84 (AEELRAKWEEAQSQKIQNLEKL), 114 to 134 (AERKRKAEVRHKEALKVQKNQ), 209 to 273 (DAHL…DLAR), 489 to 535 (RRKQ…QADQ), and 563 to 592 (HQLLQQNRLHKETVETARKRLLEYQTVLKE). Disordered stretches follow at residues 600-641 (SALV…YQPV) and 739-762 (LDSQQISSEDSENISSKPSEPSPF). S634 is modified (phosphoserine). Residues 739–757 (LDSQQISSEDSENISSKPS) are compositionally biased toward polar residues. The stretch at 811–841 (AQQGDLRFLQEQLELQKKVLQARQEAREKLL) forms a coiled coil. Disordered regions lie at residues 871-891 (SASAESGNFQTSSTKSDATVS), 973-1005 (DTQSKKIQKQPLPANKKGLLPSQSEVSKAQDGS), 1158-1178 (LSSPSQVTDWGTSRGSVSVRS), and 1216-1240 (WVDTEKESFQSSPLTPENPSSQQTG). Composition is skewed to polar residues over residues 993 to 1005 (PSQSEVSKAQDGS), 1158 to 1176 (LSSPSQVTDWGTSRGSVSV), and 1224 to 1240 (FQSSPLTPENPSSQQTG). 2 coiled-coil regions span residues 1300-1327 (QQDSLKALQEQLATQREAIIHSRQEAHE) and 1448-1493 (QHDD…SKQI). S1573 carries the phosphoserine modification. Disordered stretches follow at residues 1820–1895 (LAHD…LSSV), 1916–1937 (ESFSEQTEHLEQESTNKQEETD), 2028–2048 (DLSSPGTSQEDSDFYQSSESS), and 2089–2111 (TEGSEQSFQQLRPEFSSQESQHA). Over residues 1836-1868 (SKSHDDNAEAVKVKKSDVEDHAVLSHAVSKEEA) the composition is skewed to basic and acidic residues. Over residues 1885-1895 (QEISQEPLSSV) the composition is skewed to polar residues. Basic and acidic residues predominate over residues 1921–1935 (QTEHLEQESTNKQEE). The segment covering 2089 to 2108 (TEGSEQSFQQLRPEFSSQES) has biased composition (polar residues). The ALMS motif stretch occupies residues 2367–2412 (SLQEAFMTRQTLTERSYQRQREIWNKTRLPQTKVSKEKLPTGCTGS).

In terms of assembly, interacts (via ALMS motif) with microtubules; this interaction is direct.

It localises to the cytoplasm. It is found in the cytoskeleton. The protein resides in the microtubule organizing center. The protein localises to the centrosome. Its subcellular location is the centriole. It localises to the spindle. Centriole-enriched microtubule-binding protein involved in centriole biogenesis. Essential for the generation of the distal portion of new-born centrioles in a CPAP- and CEP120-mediated elongation dependent manner during the cell cycle S/G2 phase after formation of the initiating cartwheel structure. Required for the recruitment of centriolar proteins, such as POC1B, POC5 and CEP135, into the distal portion of centrioles. Also required for centriole-to-centrosome conversion during mitotic progression, but is dispensable for cartwheel removal or centriole disengagement. Binds to and stabilizes centriolar microtubule. May be involved in ciliogenesis. In Mus musculus (Mouse), this protein is Centrosomal protein of 295 kDa.